Here is a 351-residue protein sequence, read N- to C-terminus: DNA polymerase IV (351 aa).

A UmuC domain is found at 4–185 (IIHIDMDCFY…LPLRKIPGVG (182 aa)). Mg(2+) is bound by residues D8 and D103. E104 is an active-site residue.

Belongs to the DNA polymerase type-Y family. Monomer. The cofactor is Mg(2+).

Its subcellular location is the cytoplasm. It catalyses the reaction DNA(n) + a 2'-deoxyribonucleoside 5'-triphosphate = DNA(n+1) + diphosphate. Functionally, poorly processive, error-prone DNA polymerase involved in untargeted mutagenesis. Copies undamaged DNA at stalled replication forks, which arise in vivo from mismatched or misaligned primer ends. These misaligned primers can be extended by PolIV. Exhibits no 3'-5' exonuclease (proofreading) activity. May be involved in translesional synthesis, in conjunction with the beta clamp from PolIII. This chain is DNA polymerase IV, found in Photorhabdus laumondii subsp. laumondii (strain DSM 15139 / CIP 105565 / TT01) (Photorhabdus luminescens subsp. laumondii).